Here is a 381-residue protein sequence, read N- to C-terminus: E3 ubiquitin-protein ligase KCMF1 (381 aa).

At Ser-2 the chain carries N-acetylserine. Ser-2 carries the post-translational modification Phosphoserine. Residues 4–60 form a ZZ-type zinc finger; it reads HEGVSCDACLKGNFRGRRYKCLICYDYDLCASCYESGATTTRHTTDHPMQCILTRVD. The Zn(2+) site is built by Cys-9, Cys-12, Cys-24, Cys-27, Cys-33, Cys-36, His-46, and His-50. Residues 78–101 form a C2H2-type zinc finger; that stretch reads FTCPYCGKMGYTETSLQEHVTSEH. The disordered stretch occupies residues 154–193; sequence MFHPGRGLGGPRARRSNMHFTSSSTGGLSSSQSSYSPSNR. 3 positions are modified to phosphoserine: Ser-169, Ser-189, and Ser-212. The segment covering 175 to 191 has biased composition (low complexity); it reads SSSTGGLSSSQSSYSPS. Residues 225 to 257 are a coiled coil; the sequence is SQLQQLQMQLQLERQHAQAARQQLETARNATRR. Positions 294–314 are disordered; it reads TRLNDPKMSETERQSMESERA. The segment covering 297–314 has biased composition (basic and acidic residues); sequence NDPKMSETERQSMESERA. Phosphoserine occurs at positions 335 and 336.

This sequence belongs to the KCMF1 family. As to quaternary structure, component of the SIFI complex, composed of KCMF1, UBR4 and calmodulin (CALM1, CALM2 or CALM3). As to expression, spleen, small intestine, ovary, peripheral blood, lung, kidney and pancreas. Expressed at low levels in the thymus, prostate, testis, colon, heart, brain, placenta and liver.

The protein localises to the cytoplasm. It localises to the late endosome. Its subcellular location is the lysosome. It carries out the reaction S-ubiquitinyl-[E2 ubiquitin-conjugating enzyme]-L-cysteine + [acceptor protein]-L-lysine = [E2 ubiquitin-conjugating enzyme]-L-cysteine + N(6)-ubiquitinyl-[acceptor protein]-L-lysine.. The protein operates within protein modification; protein ubiquitination. In terms of biological role, E3 ubiquitin-protein ligase which accepts ubiquitin from an E2 ubiquitin-conjugating enzyme and then transfers it to targeted substrates, promoting their degradation by the proteasome. Together with UBR4, component of the N-end rule pathway: ubiquitinates proteins bearing specific N-terminal residues that are destabilizing according to the N-end rule, leading to their degradation. Does not ubiquitinate proteins that are acetylated at the N-terminus. Together with UBR4, part of a protein quality control pathway that catalyzes ubiquitination and degradation of proteins that have been oxidized in response to reactive oxygen species (ROS): recognizes proteins with an Arg-CysO3(H) degron at the N-terminus, and mediates assembly of heterotypic 'Lys-63'-/'Lys-27'-linked branched ubiquitin chains on oxidized proteins, leading to their degradation by autophagy. Catalytic component of the SIFI complex, a multiprotein complex required to inhibit the mitochondrial stress response after a specific stress event has been resolved: ubiquitinates and degrades (1) components of the HRI-mediated signaling of the integrated stress response, such as DELE1 and EIF2AK1/HRI, as well as (2) unimported mitochondrial precursors. Within the SIFI complex, UBR4 initiates ubiquitin chain that are further elongated or branched by KCMF1. The polypeptide is E3 ubiquitin-protein ligase KCMF1 (Homo sapiens (Human)).